The following is a 237-amino-acid chain: Peroxisomal membrane protein 11-1 (237 aa).

Residues 1 to 92 are Cytoplasmic-facing; sequence MSTLDATRAE…TLVLLGKSKN (92 aa). Residues 93–113 traverse the membrane as a helical segment; it reads ALLSTFLFLDQFVWLGRTGIY. Residues 114-204 lie on the Lumenal side of the membrane; that stretch reads KNKERTDRIV…VGLLQLSPKK (91 aa). A helical membrane pass occupies residues 205 to 223; that stretch reads ITPRVTGAFGFVTSLISCY. The Cytoplasmic segment spans residues 224 to 237; sequence QQLPSRAPAIKVKA.

The protein belongs to the peroxin-11 family. Expressed in seedlings, leaf sheaths, flag leaf, panicles and spikelets.

It is found in the peroxisome membrane. Functionally, involved in peroxisomal proliferation. This is Peroxisomal membrane protein 11-1 (PEX11-1) from Oryza sativa subsp. japonica (Rice).